Here is an 80-residue protein sequence, read N- to C-terminus: Protein transport protein SSS1 (80 aa).

At 1-46 the chain is on the cytoplasmic side; the sequence is MARASEKGEEKKQSNNQVEKLVEAPVEFVREGTQFLAKCKKPDLKE. Residues 47–75 form a helical membrane-spanning segment; that stretch reads YTKIVKAVGIGFIAVGIIGYAIKLIHIPI. At 76–80 the chain is on the extracellular side; the sequence is RYVIV.

Belongs to the SecE/SEC61-gamma family. In terms of assembly, component of the heterotrimeric Sec61 complex, which is composed of SSH1, SBH1 and SSS1. Presumably three to four Sec61 heterotrimers assemble into an oligomeric ring with a central aqueous pore. In cotranslational ER import, the pore diameter varies from 9-15 A in a ribosome-free resting state to 40-60 A in a functional state when associated with the ribosome. The Sec61 complex is part of a channel-forming translocon complex whose composition seem to change dependent upon different functional states. During post-translational ER import the Sec61 complex associates with the Sec62/63 complex to form the Sec complex. SSH1 is a component of the heterotrimeric Ssh1 complex, which is composed of SSH1, SBH2 and SSS1. SSS1 interacts with OST1, OST4, SWP1 and WBP1, components of the OT complex.

The protein localises to the endoplasmic reticulum membrane. In terms of biological role, part of the Sec61 complex, which is the major component of channel-forming translocon complex that mediates protein translocation across the endoplasmic reticulum (ER). The functional states of the translocon complex include co- and post-translational ER import, cotranslational membrane protein integration and retrograde transport of misfolded proteins out of the ER. In the cotranslational pathway, ribosomes synthesizing presecretory proteins are targeted to the translocon by the cytosolic signal recognition particle (SRP) and its ER-localized receptor. The association of the Sec61 complex with the ribosome is mediated by the 28S rRNA of the large ribosomal subunit. SRP-independent post-translational translocation requires the association of additional factors, such as the Sec62/63 complex and KAR2. Also part of the Ssh1 complex, which probably is the major component of a channel-forming translocon complex that may function exclusively in the cotranslational pathway of protein ER import. This chain is Protein transport protein SSS1 (SSS1), found in Saccharomyces cerevisiae (strain ATCC 204508 / S288c) (Baker's yeast).